We begin with the raw amino-acid sequence, 131 residues long: Glycine cleavage system H protein (131 aa).

The 83-residue stretch at 24–106 (RVTVGISDHA…YGDGWMYVVE (83 aa)) folds into the Lipoyl-binding domain. Lysine 65 bears the N6-lipoyllysine mark.

The protein belongs to the GcvH family. As to quaternary structure, the glycine cleavage system is composed of four proteins: P, T, L and H. Requires (R)-lipoate as cofactor.

The glycine cleavage system catalyzes the degradation of glycine. The H protein shuttles the methylamine group of glycine from the P protein to the T protein. In Stenotrophomonas maltophilia (strain R551-3), this protein is Glycine cleavage system H protein.